A 325-amino-acid chain; its full sequence is L-lactate dehydrogenase 1 (325 aa).

NAD(+) contacts are provided by residues Val-17, Asp-38, Lys-43, Tyr-68, and 82–83 (GA). Residues Gln-85, Arg-91, and 123–126 (NPVD) contribute to the substrate site. NAD(+) contacts are provided by residues 121–123 (AAN) and Ser-146. 151-154 (DTAR) contacts substrate. 2 residues coordinate beta-D-fructose 1,6-bisphosphate: Arg-156 and His-171. His-178 functions as the Proton acceptor in the catalytic mechanism. Tyr-223 is subject to Phosphotyrosine. Substrate is bound at residue Thr-232.

This sequence belongs to the LDH/MDH superfamily. LDH family. In terms of assembly, homotetramer.

It is found in the cytoplasm. The enzyme catalyses (S)-lactate + NAD(+) = pyruvate + NADH + H(+). Its pathway is fermentation; pyruvate fermentation to lactate; (S)-lactate from pyruvate: step 1/1. Allosterically activated by fructose 1,6-bisphosphate (FBP). Functionally, catalyzes the conversion of lactate to pyruvate. The chain is L-lactate dehydrogenase 1 from Lactococcus lactis subsp. cremoris (Streptococcus cremoris).